A 376-amino-acid polypeptide reads, in one-letter code: MYSVISEKISETITLQRQTSSRYIEFFVFRNVDINELWTTDISEDKTHDVWPAINEKSFKKFLENELTSYQRPISLLGIPQNGTVSKTCKREKQRETDCVNYVRKHGNPVTFYPRHRAKRNANTDTCISEEPSILVSHHRNSKMDVFMDANKITLVNRELIWVPHDQVRIVKLDISLCIPDGFFGVIIGHSNDVFCECITEIITDETDISVFLMNLSEHSLMLLPGDVEFSINFLPCYIPEPWEMINLSPPESAVFHLKTCREFIIKPNSYTIQCFDAMYVCADELKALMIPSKEIIKLGLLIETYIWNKDTIPSIKIFNSTRKTIYIPTGICIARIIFTCGHFCLSLMPERAINRLQVLDASSFFLFHYAAFSNA.

Belongs to the dUTPase family. Mg(2+) serves as cofactor.

The catalysed reaction is dUTP + H2O = dUMP + diphosphate + H(+). In terms of biological role, involved in nucleotide metabolism: produces dUMP, the immediate precursor of thymidine nucleotides and decreases the intracellular concentration of dUTP to avoid uracil incorporation into viral DNA. The chain is Deoxyuridine 5'-triphosphate nucleotidohydrolase from Human herpesvirus 6B (strain Z29) (HHV-6 variant B).